The sequence spans 1127 residues: Caprin-2 (1127 aa).

The disordered stretch occupies residues 67 to 108 (YQSPSGHSEEEREGNMKSAKPQVNHSQHGESQRALSPLQSTL). Over residues 99–108 (RALSPLQSTL) the composition is skewed to polar residues. Coiled coils occupy residues 129-156 (LKHKIRNIEKKKLKLEDYKDRLKSGEHL) and 194-216 (AQKKAQRREHMLKLEAEKKKLRT). Disordered stretches follow at residues 382-614 (NKQG…KDPV), 642-753 (DKPS…SSSV), and 922-975 (QCYK…PVDV). 2 stretches are compositionally biased toward basic and acidic residues: residues 402-432 (KRWDMLTEPDGQEKKQESFKSWEASGKHQEV) and 440-464 (EQRKQDTSKLRSTLPEEQKKQEISK). Composition is skewed to polar residues over residues 512 to 531 (PKSWTPSMQSEQNTTKSWTT) and 544 to 567 (TPKSWENNVESQKHSLTSQSQISP). Residues 588–597 (LNTEPKDVPK) show a composition bias toward basic and acidic residues. Polar residues-rich tracts occupy residues 665–714 (KEQN…TSET) and 741–753 (QGFQSPPASSSSV). 2 positions are modified to phosphoserine: S948 and S949. A compositionally biased stretch (polar residues) spans 956 to 970 (TFNSGDSGQGDSRSM). In terms of domain architecture, C1q spans 993 to 1127 (PQQMRVAFSA…TFSGYLLYQD (135 aa)). Residues D1078 and E1084 each contribute to the Ca(2+) site.

The protein belongs to the caprin family. In terms of assembly, homotrimer; via C1q domain. Found in a complex with LRP6, CCNY and CDK14 during G2/M stage; CAPRIN2 functions as a scaffold for the complex by binding to CCNY via its N terminus and to CDK14 via its C terminus. Interacts with LRP5. Interacts with LRP6. As to expression, detected in all tissues tested with highest levels of expression in brain and spleen.

It localises to the cytoplasm. It is found in the mitochondrion. The protein localises to the cell membrane. Functionally, promotes phosphorylation of the Wnt coreceptor LRP6, leading to increased activity of the canonical Wnt signaling pathway. Facilitates constitutive LRP6 phosphorylation by CDK14/CCNY during G2/M stage of the cell cycle, which may potentiate cells for Wnt signaling. May regulate the transport and translation of mRNAs, modulating for instance the expression of proteins involved in synaptic plasticity in neurons. Involved in regulation of growth as erythroblasts shift from a highly proliferative state towards their terminal phase of differentiation. May be involved in apoptosis. The chain is Caprin-2 from Homo sapiens (Human).